The following is a 683-amino-acid chain: DNA-directed RNA polymerase subunit beta' (683 aa).

Residues Cys69, Cys71, Cys87, and Cys90 each coordinate Zn(2+). Mg(2+)-binding residues include Asp489, Asp491, and Asp493.

This sequence belongs to the RNA polymerase beta' chain family. RpoC1 subfamily. In terms of assembly, in plastids the minimal PEP RNA polymerase catalytic core is composed of four subunits: alpha, beta, beta', and beta''. When a (nuclear-encoded) sigma factor is associated with the core the holoenzyme is formed, which can initiate transcription. Mg(2+) is required as a cofactor. The cofactor is Zn(2+).

Its subcellular location is the plastid. It localises to the chloroplast. The enzyme catalyses RNA(n) + a ribonucleoside 5'-triphosphate = RNA(n+1) + diphosphate. DNA-dependent RNA polymerase catalyzes the transcription of DNA into RNA using the four ribonucleoside triphosphates as substrates. The sequence is that of DNA-directed RNA polymerase subunit beta' from Zea mays (Maize).